The following is a 332-amino-acid chain: Putative ketol-acid reductoisomerase 3 (332 aa).

Residues 1–182 enclose the KARI N-terminal Rossmann domain; the sequence is MDKTVLDASL…AIPGGIAVIS (182 aa). The region spanning 183–329 is the KARI C-terminal knotted domain; that stretch reads SFEEEALLDL…KELYKILRRK (147 aa).

It belongs to the ketol-acid reductoisomerase family.

It catalyses the reaction (2R)-2,3-dihydroxy-3-methylbutanoate + NADP(+) = (2S)-2-acetolactate + NADPH + H(+). It carries out the reaction (2R,3R)-2,3-dihydroxy-3-methylpentanoate + NADP(+) = (S)-2-ethyl-2-hydroxy-3-oxobutanoate + NADPH + H(+). It functions in the pathway amino-acid biosynthesis; L-isoleucine biosynthesis; L-isoleucine from 2-oxobutanoate: step 2/4. It participates in amino-acid biosynthesis; L-valine biosynthesis; L-valine from pyruvate: step 2/4. The chain is Putative ketol-acid reductoisomerase 3 (ilvC3) from Saccharolobus solfataricus (strain ATCC 35092 / DSM 1617 / JCM 11322 / P2) (Sulfolobus solfataricus).